The sequence spans 398 residues: Elongation factor Tu (398 aa).

One can recognise a tr-type G domain in the interval 10–207 (KIHLNVGTIG…ILDKNIPVPN (198 aa)). Positions 19–26 (GHVDHGKT) are G1. GTP is bound at residue 19 to 26 (GHVDHGKT). Residue T26 participates in Mg(2+) binding. The G2 stretch occupies residues 60 to 64 (GITIS). Positions 81–84 (DCPG) are G3. GTP is bound by residues 81-85 (DCPGH) and 136-139 (NKAD). The interval 136-139 (NKAD) is G4. Residues 174-176 (SAL) form a G5 region.

It belongs to the TRAFAC class translation factor GTPase superfamily. Classic translation factor GTPase family. EF-Tu/EF-1A subfamily. In terms of assembly, monomer.

The protein resides in the cytoplasm. The catalysed reaction is GTP + H2O = GDP + phosphate + H(+). GTP hydrolase that promotes the GTP-dependent binding of aminoacyl-tRNA to the A-site of ribosomes during protein biosynthesis. This chain is Elongation factor Tu, found in Carsonella ruddii (strain PV).